Consider the following 158-residue polypeptide: 2-C-methyl-D-erythritol 2,4-cyclodiphosphate synthase (158 aa).

Residues D8 and H10 each contribute to the a divalent metal cation site. Residues 8 to 10 (DVH) and 34 to 35 (HS) contribute to the 4-CDP-2-C-methyl-D-erythritol 2-phosphate site. Residue H42 coordinates a divalent metal cation. Residues 56 to 58 (DIG), 61 to 65 (FPDTD), 100 to 106 (AQAPKMA), 132 to 135 (TTSE), F139, and R142 contribute to the 4-CDP-2-C-methyl-D-erythritol 2-phosphate site.

It belongs to the IspF family. In terms of assembly, homotrimer. Requires a divalent metal cation as cofactor.

It carries out the reaction 4-CDP-2-C-methyl-D-erythritol 2-phosphate = 2-C-methyl-D-erythritol 2,4-cyclic diphosphate + CMP. It participates in isoprenoid biosynthesis; isopentenyl diphosphate biosynthesis via DXP pathway; isopentenyl diphosphate from 1-deoxy-D-xylulose 5-phosphate: step 4/6. Involved in the biosynthesis of isopentenyl diphosphate (IPP) and dimethylallyl diphosphate (DMAPP), two major building blocks of isoprenoid compounds. Catalyzes the conversion of 4-diphosphocytidyl-2-C-methyl-D-erythritol 2-phosphate (CDP-ME2P) to 2-C-methyl-D-erythritol 2,4-cyclodiphosphate (ME-CPP) with a corresponding release of cytidine 5-monophosphate (CMP). This chain is 2-C-methyl-D-erythritol 2,4-cyclodiphosphate synthase, found in Aliivibrio fischeri (strain ATCC 700601 / ES114) (Vibrio fischeri).